The sequence spans 186 residues: Elongation factor P (186 aa).

It belongs to the elongation factor P family.

Its subcellular location is the cytoplasm. It participates in protein biosynthesis; polypeptide chain elongation. Functionally, involved in peptide bond synthesis. Stimulates efficient translation and peptide-bond synthesis on native or reconstituted 70S ribosomes in vitro. Probably functions indirectly by altering the affinity of the ribosome for aminoacyl-tRNA, thus increasing their reactivity as acceptors for peptidyl transferase. The chain is Elongation factor P from Prochlorococcus marinus (strain MIT 9313).